The primary structure comprises 522 residues: Leucine-rich repeat transmembrane neuronal protein 1 (522 aa).

An N-terminal signal peptide occupies residues 1–34; that stretch reads MDFLLLGLCLHWLLRRPSGVVLCLLGACFQMLPA. The 29-residue stretch at 35 to 63 folds into the LRRNT domain; the sequence is APSGCPGQCRCEGRLLYCEALNLTEAPHN. Topologically, residues 35–427 are extracellular; sequence APSGCPGQCR…HAENAVQIHK (393 aa). N-linked (GlcNAc...) asparagine glycosylation is found at Asn-56 and Asn-63. LRR repeat units lie at residues 64 to 87, 89 to 111, 112 to 135, 136 to 159, 161 to 183, 184 to 207, 209 to 231, 233 to 255, 256 to 278, and 280 to 302; these read LSGL…QFTG, MQLT…AFQK, LRRV…TFRP, MPNL…LFHG, RKLT…IFQD, CRSL…SFAG, FKLT…HFPR, ISLH…LDWV, WNLE…VFET, and PYLQ…ILNS. Asn-130 carries N-linked (GlcNAc...) asparagine glycosylation. Residues 314–365 form the LRRCT domain; sequence NLWDCGRNVCALASWLSNFQGRYDANLQCASPEYAQGEDVLDAVYAFHLCED. An N-linked (GlcNAc...) asparagine glycan is attached at Asn-381. The chain crosses the membrane as a helical span at residues 428-448; the sequence is VVTGTMALIFSFLIVVLVLYV. The Cytoplasmic segment spans residues 449–522; it reads SWKCFPASLR…HQQPARECEV (74 aa).

Belongs to the LRRTM family. Expressed predominantly in the nervous system by postmitotic neurons, but also in some non-neuronal tissues. In adult brain expression is most prominent in the forebraain, particularly in the thalamus and in the cortical areas including hippocampus, piriform and posterior cingulate.

Its subcellular location is the cell membrane. The protein localises to the postsynaptic cell membrane. In terms of biological role, exhibits strong synaptogenic activity, restricted to excitatory presynaptic differentiation, acting at both pre- and postsynaptic level. This chain is Leucine-rich repeat transmembrane neuronal protein 1 (Lrrtm1), found in Mus musculus (Mouse).